Reading from the N-terminus, the 141-residue chain is Nucleoside diphosphate kinase (141 aa).

Residues Lys11, Phe59, Arg87, Thr93, Arg104, and Asn114 each contribute to the ATP site. The Pros-phosphohistidine intermediate role is filled by His117.

The protein belongs to the NDK family. Homotetramer. Requires Mg(2+) as cofactor.

Its subcellular location is the cytoplasm. It catalyses the reaction a 2'-deoxyribonucleoside 5'-diphosphate + ATP = a 2'-deoxyribonucleoside 5'-triphosphate + ADP. The catalysed reaction is a ribonucleoside 5'-diphosphate + ATP = a ribonucleoside 5'-triphosphate + ADP. Its function is as follows. Major role in the synthesis of nucleoside triphosphates other than ATP. The ATP gamma phosphate is transferred to the NDP beta phosphate via a ping-pong mechanism, using a phosphorylated active-site intermediate. The sequence is that of Nucleoside diphosphate kinase from Paraburkholderia phymatum (strain DSM 17167 / CIP 108236 / LMG 21445 / STM815) (Burkholderia phymatum).